The sequence spans 429 residues: Protein FAM98B (429 aa).

The interval 304–429 (RVPDRGGRPN…GGGGGGYRRY (126 aa)) is disordered. Over residues 305-314 (VPDRGGRPNE) the composition is skewed to basic and acidic residues. A compositionally biased stretch (gly residues) spans 332–429 (GGRGGWGGGG…GGGGGGYRRY (98 aa)).

Belongs to the FAM98 family. Homodimer. Component of a tRNA-splicing ligase complex. Interacts with FAM98A.

The protein resides in the nucleus. The protein localises to the cytoplasm. In terms of biological role, positively stimulates PRMT1-induced protein arginine dimethylated arginine methylation. In Mus musculus (Mouse), this protein is Protein FAM98B (Fam98b).